Here is a 90-residue protein sequence, read N- to C-terminus: Small ribosomal subunit protein bS18 (90 aa).

Positions 1-23 (MKPMRQKNTRAQGNKSISNALAS) are disordered. Positions 9-21 (TRAQGNKSISNAL) are enriched in polar residues.

The protein belongs to the bacterial ribosomal protein bS18 family. Part of the 30S ribosomal subunit. Forms a tight heterodimer with protein bS6.

Its function is as follows. Binds as a heterodimer with protein bS6 to the central domain of the 16S rRNA, where it helps stabilize the platform of the 30S subunit. The chain is Small ribosomal subunit protein bS18 from Chlorobium luteolum (strain DSM 273 / BCRC 81028 / 2530) (Pelodictyon luteolum).